The primary structure comprises 319 residues: Malate dehydrogenase (319 aa).

NAD(+) contacts are provided by residues 10–15 and Asp34; that span reads GAGNIG. Arg83 and Arg89 together coordinate substrate. NAD(+) is bound by residues Asn96 and 119–121; that span reads ITN. Substrate is bound by residues Asn121 and Arg152. Catalysis depends on His176, which acts as the Proton acceptor.

This sequence belongs to the LDH/MDH superfamily. MDH type 3 family.

The catalysed reaction is (S)-malate + NAD(+) = oxaloacetate + NADH + H(+). Catalyzes the reversible oxidation of malate to oxaloacetate. This chain is Malate dehydrogenase, found in Francisella tularensis subsp. mediasiatica (strain FSC147).